The chain runs to 932 residues: MISLNKKLVLLVGVIFHVAFMWSIFDIYFVSPLIHGMKHHQSTATPPAKRLFLIVGDGLRADKAFEKVRHPTTGESEYLAPFLRSKVMSDATFGISHTRMPTESRPGHVALIAGFYEDVSAVTKGWKENPVDFDSVFNQSRHTYSLGSPDILPMFKHGAEDQSRIDAIMYGHDFEDFTKGSIELDAFVFDHLDEIFDKSKTNKTLDDQLRSDKTVFFLHLLGIDTAGHSYRPYSAEYYDNIKYIDENIEKLVDKVNKFYNDDEQTAWVFTADHGMSDWGSHGDGHPDNTRTPLIAWGAGVNKPIPAFEDKGNHDDYSEVWDLPVKRNDVNQADIASLMSYLVGLNYPSNSVGELPLAFVNATSETKALAIRNNALALVEQYLVKEEQQKGSQIIFKPYPPLSDAGKTIDERLAHIDELIAQGLDQESIVASEELMTYAITGLKYLQTYNWLFLRTLVTIGFFGWIAVAFCSYLLAFVVQSDKPFTTSLPLKGVAYVALAILSGFFVFQKSPLHYHLYAVFPVVFWEAVLQRRTAVAEGISILARRSTSKAPALAAILDIGLSLVLLEAIVYGYFHREIFSVCFGLATLWPFVHNFTVAKREWPTTLAWVVMCAIMSSFTLLEVVKVESIEQILLSGALMLVIGLVFTIHLQRKLALAASTVCVLFAQILLVVATMYFTRESVESLTARNGLPLFSQVGGWISLLLSLAVPFLHFLGSDAKDYRLRLLIIFLAFGPTFVILTISWEGFFYVCFFAILVIWIELETQMRDARVTPQTRADLTPGDFRMALFTFFMSQIGFFGIGNIASISSFSLDSVYRLIPVFDPFSMGALLMFKILVPFAVLSACLGILNLKLGVPPSALFSMVLCVSDILTLNFFYLVVDEGSWLDIGTGISHYCIASGLSLFMMVLEYLSGVLVAGVTIAPHVSKIKKDM.

Over 1 to 8 the chain is Cytoplasmic; it reads MISLNKKL. Residues 9 to 29 form a helical membrane-spanning segment; that stretch reads VLLVGVIFHVAFMWSIFDIYF. The Lumenal portion of the chain corresponds to 30–456; sequence VSPLIHGMKH…TYNWLFLRTL (427 aa). Asparagine 138, asparagine 202, and asparagine 360 each carry an N-linked (GlcNAc...) asparagine glycan. The helical transmembrane segment at 457 to 477 threads the bilayer; it reads VTIGFFGWIAVAFCSYLLAFV. Residues 478 to 486 are Cytoplasmic-facing; it reads VQSDKPFTT. A helical transmembrane segment spans residues 487-507; that stretch reads SLPLKGVAYVALAILSGFFVF. Residues 508 to 509 are Lumenal-facing; the sequence is QK. Residues 510-530 traverse the membrane as a helical segment; that stretch reads SPLHYHLYAVFPVVFWEAVLQ. Residues 531–551 are Cytoplasmic-facing; that stretch reads RRTAVAEGISILARRSTSKAP. The chain crosses the membrane as a helical span at residues 552–572; the sequence is ALAAILDIGLSLVLLEAIVYG. The Lumenal segment spans residues 573–577; it reads YFHRE. A helical membrane pass occupies residues 578-598; sequence IFSVCFGLATLWPFVHNFTVA. The Cytoplasmic segment spans residues 599 to 603; the sequence is KREWP. Residues 604 to 624 traverse the membrane as a helical segment; the sequence is TTLAWVVMCAIMSSFTLLEVV. The Lumenal portion of the chain corresponds to 625 to 627; it reads KVE. The helical transmembrane segment at 628 to 648 threads the bilayer; the sequence is SIEQILLSGALMLVIGLVFTI. At 649-653 the chain is on the cytoplasmic side; it reads HLQRK. Residues 654 to 674 traverse the membrane as a helical segment; the sequence is LALAASTVCVLFAQILLVVAT. Topologically, residues 675–696 are lumenal; the sequence is MYFTRESVESLTARNGLPLFSQ. The chain crosses the membrane as a helical span at residues 697–717; sequence VGGWISLLLSLAVPFLHFLGS. Over 718–737 the chain is Cytoplasmic; the sequence is DAKDYRLRLLIIFLAFGPTF. The helical transmembrane segment at 738–758 threads the bilayer; sequence VILTISWEGFFYVCFFAILVI. The Lumenal portion of the chain corresponds to 759-786; it reads WIELETQMRDARVTPQTRADLTPGDFRM. The chain crosses the membrane as a helical span at residues 787-807; that stretch reads ALFTFFMSQIGFFGIGNIASI. Residues 808–828 are Cytoplasmic-facing; the sequence is SSFSLDSVYRLIPVFDPFSMG. The chain crosses the membrane as a helical span at residues 829–849; that stretch reads ALLMFKILVPFAVLSACLGIL. Over 850–859 the chain is Lumenal; that stretch reads NLKLGVPPSA. Residues 860 to 880 form a helical membrane-spanning segment; it reads LFSMVLCVSDILTLNFFYLVV. Residues 881-900 are Cytoplasmic-facing; the sequence is DEGSWLDIGTGISHYCIASG. A helical transmembrane segment spans residues 901 to 921; sequence LSLFMMVLEYLSGVLVAGVTI. The Lumenal portion of the chain corresponds to 922 to 932; it reads APHVSKIKKDM.

The protein belongs to the PIGG/PIGN/PIGO family. PIGN subfamily.

Its subcellular location is the endoplasmic reticulum membrane. The protein operates within glycolipid biosynthesis; glycosylphosphatidylinositol-anchor biosynthesis. Its function is as follows. Ethanolamine phosphate transferase involved in glycosylphosphatidylinositol-anchor biosynthesis. Transfers ethanolamine phosphate to the first alpha-1,4-linked mannose of the glycosylphosphatidylinositol precursor of GPI-anchor. In Yarrowia lipolytica (strain CLIB 122 / E 150) (Yeast), this protein is GPI ethanolamine phosphate transferase 1 (MCD4).